The sequence spans 129 residues: Snaclec coagulation factor IX-binding protein subunit A (129 aa).

Residues 1–129 (DCPSGWSSYE…GQQNPFVCEA (129 aa)) form the C-type lectin domain. Cystine bridges form between Cys2–Cys13, Cys30–Cys127, and Cys102–Cys119. Ca(2+) contacts are provided by Ser41, Glu43, and Glu47. Glu128 lines the Ca(2+) pocket.

This sequence belongs to the snaclec family. In terms of assembly, heterodimer of subunits A and B; disulfide-linked. In terms of tissue distribution, expressed by the venom gland.

The protein localises to the secreted. In terms of biological role, anticoagulant protein which binds to the gamma-carboxyglutamic acid-domain regions of factor IX (F9) (but not factor X) in the presence of calcium with a 1 to 1 stoichiometry. In Protobothrops flavoviridis (Habu), this protein is Snaclec coagulation factor IX-binding protein subunit A.